Consider the following 108-residue polypeptide: Large ribosomal subunit protein uL24 (108 aa).

It belongs to the universal ribosomal protein uL24 family. As to quaternary structure, part of the 50S ribosomal subunit.

Its function is as follows. One of two assembly initiator proteins, it binds directly to the 5'-end of the 23S rRNA, where it nucleates assembly of the 50S subunit. One of the proteins that surrounds the polypeptide exit tunnel on the outside of the subunit. The sequence is that of Large ribosomal subunit protein uL24 from Mycoplasmopsis synoviae (strain 53) (Mycoplasma synoviae).